Here is an 85-residue protein sequence, read N- to C-terminus: UPF0386 protein VF_0869 (85 aa).

It belongs to the UPF0386 family.

The polypeptide is UPF0386 protein VF_0869 (Aliivibrio fischeri (strain ATCC 700601 / ES114) (Vibrio fischeri)).